The chain runs to 27 residues: Pregnancy-associated glycoprotein 62 (27 aa).

The protein belongs to the peptidase A1 family. Post-translationally, glycosylated. As to expression, placenta.

The sequence is that of Pregnancy-associated glycoprotein 62 (PAG62) from Capra hircus (Goat).